The following is a 900-amino-acid chain: DNA mismatch repair protein MutS (900 aa).

Residue 637–644 (GPNMAGKS) coordinates ATP.

Belongs to the DNA mismatch repair MutS family.

Functionally, this protein is involved in the repair of mismatches in DNA. It is possible that it carries out the mismatch recognition step. This protein has a weak ATPase activity. This chain is DNA mismatch repair protein MutS, found in Methanosarcina barkeri (strain Fusaro / DSM 804).